The chain runs to 173 residues: Large ribosomal subunit protein uL10 (173 aa).

This sequence belongs to the universal ribosomal protein uL10 family. Part of the ribosomal stalk of the 50S ribosomal subunit. The N-terminus interacts with L11 and the large rRNA to form the base of the stalk. The C-terminus forms an elongated spine to which L12 dimers bind in a sequential fashion forming a multimeric L10(L12)X complex.

Forms part of the ribosomal stalk, playing a central role in the interaction of the ribosome with GTP-bound translation factors. The sequence is that of Large ribosomal subunit protein uL10 from Chloroherpeton thalassium (strain ATCC 35110 / GB-78).